We begin with the raw amino-acid sequence, 603 residues long: Isovalerate--CoA ligase AAE2 (603 aa).

This sequence belongs to the ATP-dependent AMP-binding enzyme family. Expressed at low levels in leaves, flowers and developing seeds.

The enzyme catalyses 3-methylbutanoate + ATP + CoA = 3-methylbutanoyl-CoA + AMP + diphosphate. It carries out the reaction hexanoate + ATP + CoA = hexanoyl-CoA + AMP + diphosphate. The catalysed reaction is butanoate + ATP + CoA = butanoyl-CoA + AMP + diphosphate. It catalyses the reaction pentanoate + ATP + CoA = pentanoyl-CoA + AMP + diphosphate. The enzyme catalyses 3-methylpentanoate + ATP + CoA = 3-methylpentanoyl-CoA + AMP + diphosphate. It carries out the reaction 4-methylpentanoate + ATP + CoA = 4-methylpentanoyl-CoA + AMP + diphosphate. Functionally, catalyzes the ligation of CoA on isovalerate to produce 3-methylbutanoyl-CoA. Can also use butanoate, pentanoate, hexanoate, 3-methylpentanoate and 4-methylpentanoate as substrates with a lower efficiency. In Arabidopsis thaliana (Mouse-ear cress), this protein is Isovalerate--CoA ligase AAE2.